We begin with the raw amino-acid sequence, 103 residues long: MADQKIQIRLKAFDCRLIDRSAGEIVETAKRTGAHVRGPIPLPTKIERCTILVSPHADKDARDQYETCTYKRVLYIVDPNDKTVDALMRLELAAGVDVQIKLT.

The protein belongs to the universal ribosomal protein uS10 family. As to quaternary structure, part of the 30S ribosomal subunit.

In terms of biological role, involved in the binding of tRNA to the ribosomes. This chain is Small ribosomal subunit protein uS10, found in Xylella fastidiosa (strain M12).